The primary structure comprises 311 residues: tRNA-cytidine(32) 2-sulfurtransferase (311 aa).

The PP-loop motif signature appears at 58–63 (SGGKDS). [4Fe-4S] cluster-binding residues include Cys133, Cys136, and Cys224.

The protein belongs to the TtcA family. As to quaternary structure, homodimer. The cofactor is Mg(2+). [4Fe-4S] cluster serves as cofactor.

Its subcellular location is the cytoplasm. It catalyses the reaction cytidine(32) in tRNA + S-sulfanyl-L-cysteinyl-[cysteine desulfurase] + AH2 + ATP = 2-thiocytidine(32) in tRNA + L-cysteinyl-[cysteine desulfurase] + A + AMP + diphosphate + H(+). It participates in tRNA modification. Functionally, catalyzes the ATP-dependent 2-thiolation of cytidine in position 32 of tRNA, to form 2-thiocytidine (s(2)C32). The sulfur atoms are provided by the cysteine/cysteine desulfurase (IscS) system. The chain is tRNA-cytidine(32) 2-sulfurtransferase from Polaromonas sp. (strain JS666 / ATCC BAA-500).